Reading from the N-terminus, the 143-residue chain is Large ribosomal subunit protein uL13 (143 aa).

The protein belongs to the universal ribosomal protein uL13 family. As to quaternary structure, part of the 50S ribosomal subunit.

In terms of biological role, this protein is one of the early assembly proteins of the 50S ribosomal subunit, although it is not seen to bind rRNA by itself. It is important during the early stages of 50S assembly. The chain is Large ribosomal subunit protein uL13 from Prochlorococcus marinus (strain MIT 9312).